We begin with the raw amino-acid sequence, 145 residues long: Large-conductance mechanosensitive channel (145 aa).

Helical transmembrane passes span 14–34, 38–58, and 81–101; these read VMDL…VKSL, LIMP…YFLP, and GSFL…FLMV.

The protein belongs to the MscL family. Homopentamer.

It localises to the cell inner membrane. Its function is as follows. Channel that opens in response to stretch forces in the membrane lipid bilayer. May participate in the regulation of osmotic pressure changes within the cell. This chain is Large-conductance mechanosensitive channel, found in Rhizobium leguminosarum bv. trifolii (strain WSM2304).